The chain runs to 100 residues: Small ribosomal subunit protein uS14c (100 aa).

It belongs to the universal ribosomal protein uS14 family. Part of the 30S ribosomal subunit.

Its subcellular location is the plastid. Its function is as follows. Binds 16S rRNA, required for the assembly of 30S particles. The chain is Small ribosomal subunit protein uS14c from Cuscuta exaltata (Tall dodder).